The chain runs to 327 residues: Ribosomal RNA small subunit methyltransferase H (327 aa).

Residues 41–43 (GGH), Asp-60, Tyr-87, Asp-108, and Gln-115 each bind S-adenosyl-L-methionine. A disordered region spans residues 292 to 327 (AERADEQETLENPRAASARLRAVERLRETTTPGSAR).

It belongs to the methyltransferase superfamily. RsmH family.

Its subcellular location is the cytoplasm. It catalyses the reaction cytidine(1402) in 16S rRNA + S-adenosyl-L-methionine = N(4)-methylcytidine(1402) in 16S rRNA + S-adenosyl-L-homocysteine + H(+). Its function is as follows. Specifically methylates the N4 position of cytidine in position 1402 (C1402) of 16S rRNA. The sequence is that of Ribosomal RNA small subunit methyltransferase H from Kocuria rhizophila (strain ATCC 9341 / DSM 348 / NBRC 103217 / DC2201).